Reading from the N-terminus, the 445-residue chain is Cyclic GMP-AMP phosphodiesterase SMPDL3A (445 aa).

Positions 1-22 are cleaved as a signal peptide; the sequence is MALPGNFLCCLLVAWLCDPGLG. 2 residues coordinate Zn(2+): D42 and H44. C59 and C78 are joined by a disulfide. Residue N66 is glycosylated (N-linked (GlcNAc...) asparagine). D107 lines the Zn(2+) pocket. H111 lines the ATP pocket. N128 carries N-linked (GlcNAc...) asparagine glycosylation. Position 148 (N148) interacts with Zn(2+). ATP is bound by residues N148 and H149. Residues N219 and N235 are each glycosylated (N-linked (GlcNAc...) asparagine). Zn(2+) is bound by residues H249, H290, and H292. 2 N-linked (GlcNAc...) asparagine glycosylation sites follow: N353 and N364. 2 disulfide bridges follow: C417-C421 and C427-C440.

This sequence belongs to the acid sphingomyelinase family. As to quaternary structure, monomer. Homodimer; homodimerizes following 2',3'-cGAMP-binding. Zn(2+) is required as a cofactor.

It localises to the secreted. The enzyme catalyses 2',3'-cGAMP + H2O = 5'-pGpA(2'-5') + H(+). The catalysed reaction is 5'-pGpA(2'-5') + H2O = 5'-GpA(2'-5') + phosphate. It catalyses the reaction a ribonucleoside 5'-triphosphate + H2O = a ribonucleoside 5'-diphosphate + phosphate + H(+). It carries out the reaction ATP + H2O = ADP + phosphate + H(+). In terms of biological role, cyclic-nucleotide phosphodiesterase that acts as a negative regulator of innate immunity by mediating degradation of 2',3'-cGAMP, thereby inhibiting the cGAS-STING signaling. Specifically linearizes 2',3'-cGAMP into 2'5'-bond pGpA and further hydrolyzes pGpA to produce GpA. Also has in vitro nucleotide phosphodiesterase activity with nucleoside triphosphates, such as ATP. Has in vitro activity with p-nitrophenyl-TMP. Has lower activity with nucleoside diphosphates, and no activity with nucleoside monophosphates. Has in vitro activity with CDP-choline, giving rise to CMP and phosphocholine. Has in vitro activity with CDP-ethanolamine. Does not have sphingomyelin phosphodiesterase activity. The polypeptide is Cyclic GMP-AMP phosphodiesterase SMPDL3A (Smpdl3a) (Rattus norvegicus (Rat)).